A 348-amino-acid chain; its full sequence is Dihydroorotase (348 aa).

2 residues coordinate Zn(2+): H17 and H19. Substrate-binding positions include 19-21 and N45; that span reads HLR. Zn(2+)-binding residues include K103, H140, and H178. N6-carboxylysine is present on K103. Position 140 (H140) interacts with substrate. L223 is a binding site for substrate. Zn(2+) is bound at residue D251. D251 is an active-site residue. 2 residues coordinate substrate: H255 and A267.

This sequence belongs to the metallo-dependent hydrolases superfamily. DHOase family. Class II DHOase subfamily. As to quaternary structure, homodimer. Zn(2+) is required as a cofactor.

It catalyses the reaction (S)-dihydroorotate + H2O = N-carbamoyl-L-aspartate + H(+). Its pathway is pyrimidine metabolism; UMP biosynthesis via de novo pathway; (S)-dihydroorotate from bicarbonate: step 3/3. Catalyzes the reversible cyclization of carbamoyl aspartate to dihydroorotate. In Shigella flexneri serotype 5b (strain 8401), this protein is Dihydroorotase.